Reading from the N-terminus, the 62-residue chain is Lepidopteran-selective toxin (62 aa).

Residues 1-24 (MKFLYGVILIALFLTVMTATLSEA) form the signal peptide. Cystine bridges form between Cys26–Cys43, Cys29–Cys51, Cys40–Cys56, and Cys44–Cys58. Residue Tyr62 is a propeptide.

Belongs to the short scorpion toxin superfamily. Chloride channel inhibitor family. As to expression, expressed by the venom gland.

Its subcellular location is the secreted. In terms of biological role, toxin with unknown function in healthy organisms. On glioma cells, interacts with chloride channels (probably ClC-3/CLCN3) and MMP2 at the surface of glioma cells. This complex is then internalized via caveolae, thus inhibiting the chloride channels necessary for cell shrinkage and tumor propagation. Induces flaccid paralysis in H.virescens larvae. Is not toxic to S.falculata larvae or mice. The polypeptide is Lepidopteran-selective toxin (Hottentotta tamulus (Eastern Indian scorpion)).